A 121-amino-acid polypeptide reads, in one-letter code: Large ribosomal subunit protein bL20 (121 aa).

The protein belongs to the bacterial ribosomal protein bL20 family.

Functionally, binds directly to 23S ribosomal RNA and is necessary for the in vitro assembly process of the 50S ribosomal subunit. It is not involved in the protein synthesizing functions of that subunit. The sequence is that of Large ribosomal subunit protein bL20 (rplT) from Chlamydia pneumoniae (Chlamydophila pneumoniae).